The sequence spans 373 residues: Queuine tRNA-ribosyltransferase (373 aa).

The active-site Proton acceptor is Asp90. Residues Asp90–Phe94, Asp144, Gln193, and Gly220 each bind substrate. Residues Gly251–Asp257 form an RNA binding region. Asp270 (nucleophile) is an active-site residue. The interval Thr275–Arg279 is RNA binding; important for wobble base 34 recognition. Cys308, Cys310, Cys313, and His339 together coordinate Zn(2+).

It belongs to the queuine tRNA-ribosyltransferase family. In terms of assembly, homodimer. Within each dimer, one monomer is responsible for RNA recognition and catalysis, while the other monomer binds to the replacement base PreQ1. It depends on Zn(2+) as a cofactor.

The enzyme catalyses 7-aminomethyl-7-carbaguanine + guanosine(34) in tRNA = 7-aminomethyl-7-carbaguanosine(34) in tRNA + guanine. It functions in the pathway tRNA modification; tRNA-queuosine biosynthesis. Functionally, catalyzes the base-exchange of a guanine (G) residue with the queuine precursor 7-aminomethyl-7-deazaguanine (PreQ1) at position 34 (anticodon wobble position) in tRNAs with GU(N) anticodons (tRNA-Asp, -Asn, -His and -Tyr). Catalysis occurs through a double-displacement mechanism. The nucleophile active site attacks the C1' of nucleotide 34 to detach the guanine base from the RNA, forming a covalent enzyme-RNA intermediate. The proton acceptor active site deprotonates the incoming PreQ1, allowing a nucleophilic attack on the C1' of the ribose to form the product. After dissociation, two additional enzymatic reactions on the tRNA convert PreQ1 to queuine (Q), resulting in the hypermodified nucleoside queuosine (7-(((4,5-cis-dihydroxy-2-cyclopenten-1-yl)amino)methyl)-7-deazaguanosine). The sequence is that of Queuine tRNA-ribosyltransferase from Campylobacter jejuni subsp. doylei (strain ATCC BAA-1458 / RM4099 / 269.97).